Reading from the N-terminus, the 186-residue chain is ADP-ribosylation factor-like protein 6 (186 aa).

The N-myristoyl glycine moiety is linked to residue glycine 2. Residues 24-31 (GLDNSGKT), threonine 50, 69-73 (DMSGQ), glycine 72, 130-133 (NKMD), and alanine 164 each bind GTP. Mg(2+) contacts are provided by threonine 31 and threonine 50.

The protein belongs to the small GTPase superfamily. Arf family. In terms of assembly, interacts with SEC61B, ARL6IP1, ARL6IP2, ARL6IP3, ARL6IP4 ARL6IP5 and ARL6IP6. Interacts (GTP-bound form) with the BBSome a complex that contains BBS1, BBS2, BBS4, BBS5, BBS7, BBS8/TTC8, BBS9 and BBIP10. Interacts (GTP-free form) with IFT27.

The protein localises to the cell projection. The protein resides in the cilium membrane. It is found in the cytoplasm. Its subcellular location is the cytoskeleton. It localises to the cilium axoneme. The protein localises to the cilium basal body. Functionally, involved in membrane protein trafficking at the base of the ciliary organelle. Mediates recruitment onto plasma membrane of the BBSome complex which would constitute a coat complex required for sorting of specific membrane proteins to the primary cilia. Together with BBS1, is necessary for correct trafficking of PKD1 to primary cilia. Together with the BBSome complex and LTZL1, controls SMO ciliary trafficking and contributes to the sonic hedgehog (SHH) pathway regulation. May regulate cilia assembly and disassembly and subsequent ciliary signaling events such as the Wnt signaling cascade. Isoform 2 may be required for proper retinal function and organization. This is ADP-ribosylation factor-like protein 6 (ARL6) from Homo sapiens (Human).